The following is a 333-amino-acid chain: Glycogenin-1 (333 aa).

N-acetylthreonine is present on threonine 2. Residues leucine 9, threonine 11, asparagine 12, and tyrosine 15 each coordinate UDP. The UDP-alpha-D-glucose site is built by leucine 9, threonine 11, asparagine 12, and tyrosine 15. Serine 44 carries the post-translational modification Phosphoserine; by PKA; in vitro. Arginine 77 is a binding site for UDP. UDP-alpha-D-glucose-binding residues include arginine 77, lysine 86, aspartate 102, alanine 103, aspartate 104, asparagine 133, serine 134, aspartate 160, aspartate 163, and glutamine 164. Residues aspartate 102, alanine 103, and aspartate 104 each contribute to the UDP site. A Mn(2+)-binding site is contributed by aspartate 102. Aspartate 104 lines the Mn(2+) pocket. The O-linked (Glc...) tyrosine glycan is linked to tyrosine 195. The UDP site is built by histidine 212, glycine 215, and lysine 218. Histidine 212 contributes to the Mn(2+) binding site. Glycine 215 and lysine 218 together coordinate UDP-alpha-D-glucose. An interaction with GYS1 region spans residues 284-316 (SHLSLGETPATTQPFVSSEERKERWEQGQADYM).

It belongs to the glycosyltransferase 8 family. Glycogenin subfamily. As to quaternary structure, part of the GYS1-GYG1 complex, a heterooctamer composed of a tetramer of GYS1 and 2 dimers of GYG1, where each GYS1 protomer binds to one GYG1 subunit (via GYG1 C-terminus); the GYS1 tetramer may dissociate from GYG1 dimers to continue glycogen polymerization on its own. May also form a heterooctamer complex with GYS2 (via GYG1 C-terminus). Requires Mn(2+) as cofactor. Self-glycosylated by the transfer of glucose residues from UDP-glucose to itself, forming an alpha-1,4-glycan of around 10 residues attached to Tyr-195. Post-translationally, phosphorylated. Detected in heart, skeletal muscle, brain and testis, and at lower levels in kidney.

It localises to the cytoplasm. The protein resides in the nucleus. The enzyme catalyses L-tyrosyl-[glycogenin] + UDP-alpha-D-glucose = alpha-D-glucosyl-L-tyrosyl-[glycogenin] + UDP + H(+). It catalyses the reaction [1,4-alpha-D-glucosyl](n)-L-tyrosyl-[glycogenin] + UDP-alpha-D-glucose = [1,4-alpha-D-glucosyl](n+1)-L-tyrosyl-[glycogenin] + UDP + H(+). It functions in the pathway glycan biosynthesis; glycogen biosynthesis. In terms of biological role, glycogenin participates in the glycogen biosynthetic process along with glycogen synthase and glycogen branching enzyme. It catalyzes the formation of a short alpha (1,4)-glucosyl chain covalently attached via a glucose 1-O-tyrosyl linkage to internal tyrosine residues and these chains act as primers for the elongation reaction catalyzed by glycogen synthase. The protein is Glycogenin-1 (GYG1) of Oryctolagus cuniculus (Rabbit).